The sequence spans 488 residues: Germacrene A hydroxylase (488 aa).

The Cytoplasmic portion of the chain corresponds to Met1–Thr6. The helical; Signal-anchor for type II membrane protein transmembrane segment at Thr7–Thr23 threads the bilayer. The Lumenal segment spans residues Arg24–Phe488. 3 N-linked (GlcNAc...) asparagine glycosylation sites follow: Asn169, Asn260, and Asn379. Cys432 is a heme binding site.

It belongs to the cytochrome P450 family. Requires heme as cofactor.

The protein localises to the endoplasmic reticulum membrane. It catalyses the reaction (+)-(R)-germacrene A + 3 reduced [NADPH--hemoprotein reductase] + 3 O2 = germacra-1(10),4,11(13)-trien-12-oate + 3 oxidized [NADPH--hemoprotein reductase] + 4 H2O + 4 H(+). It functions in the pathway secondary metabolite biosynthesis; terpenoid biosynthesis. Its function is as follows. Involved in the biosynthesis of germacrene-derived sesquiterpene lactones. Catalyzes three consecutive oxidations of germacrene A to produce germacrene A acid. Could also catalyze the three-step oxidation of non-natural substrate amorphadiene to artemisinic acid. The polypeptide is Germacrene A hydroxylase (Lactuca sativa (Garden lettuce)).